A 552-amino-acid polypeptide reads, in one-letter code: MPPERKSRTRRDRRAGATPGRKARPGSGSTPAKAARSSQRTQPAEPRAAPSAGSAAAAAEEEESRLRQRNRLTLEDDKPAAERCLEQLVFGDVEDDEDALLQRLRSSRGQLHGSSDESEVENEAKDIFSQKKKQPVWVDEDDEDEEIVDMSNNRFRKDIMKNASESKLSKDKLQKRLKEEFQHAMGGVPDWAEAGSKRRTSSDDESEEDEDDLLQRTGNFISTSTSLPRGILKMKNCRPANAERPTTARISSVQFHPGAQVVMVSGVDNAISLFQVDGKTNPKIQSIYLEKFPIFKACFSANGEEVLATSMHSKVLYVYDMLAGKLIPVHQVRGLKEKTVKQFEVSPDGSFLLISGIAGFSHLLSMKTKELIGSMKINGRIAASTFSSDSKRIYTYSENGEVYVWDVNSRKCMNRFLDEGSLCGLSIAASKNGQYVACGSKSGVVNIYNQDSCLQQTNPKPIKAIMNLVTGVTSLAFNPTTEILAVASRKMKEAVRLVHLPSCTVFSNFPVFKKSTLSRVQTMDFSPRGGYFALGNEKGRALMYRLHHYSDF.

2 disordered regions span residues 1–81 (MPPE…KPAA) and 104–143 (LRSSRGQLHGSSDESEVENEAKDIFSQKKKQPVWVDEDDE). Over residues 43–58 (PAEPRAAPSAGSAAAA) the composition is skewed to low complexity. Positions 72 to 81 (LTLEDDKPAA) are enriched in basic and acidic residues. A Glycyl lysine isopeptide (Lys-Gly) (interchain with G-Cter in SUMO2) cross-link involves residue K78. Phosphoserine occurs at positions 114, 115, and 118. Glycyl lysine isopeptide (Lys-Gly) (interchain with G-Cter in SUMO2) cross-links involve residues K178 and K197. Residues 183–214 (HAMGGVPDWAEAGSKRRTSSDDESEEDEDDLL) form a disordered region. T200 is modified (phosphothreonine). 3 positions are modified to phosphoserine: S201, S202, and S206. Acidic residues predominate over residues 203 to 212 (DDESEEDEDD). T217 is modified (phosphothreonine). 5 WD repeats span residues 245–284 (PTTARISSVQFHPGAQVVMVSGVDNAISLFQVDGKTNPKI), 289–329 (LEKF…LIPV), 376–415 (KINGRIAASTFSSDSKRIYTYSENGEVYVWDVNSRKCMNR), 417–458 (LDEG…QQTN), and 467–508 (NLVT…VFSN). A Glycyl lysine isopeptide (Lys-Gly) (interchain with G-Cter in SUMO2) cross-link involves residue K513. Residues 515-551 (STLSRVQTMDFSPRGGYFALGNEKGRALMYRLHHYSD) form a WD 6 repeat.

This sequence belongs to the WD repeat UTP18 family. In terms of assembly, part of the small subunit (SSU) processome, composed of more than 70 proteins and the RNA chaperone small nucleolar RNA (snoRNA) U3.

The protein localises to the nucleus. The protein resides in the nucleolus. Its function is as follows. Part of the small subunit (SSU) processome, first precursor of the small eukaryotic ribosomal subunit. During the assembly of the SSU processome in the nucleolus, many ribosome biogenesis factors, an RNA chaperone and ribosomal proteins associate with the nascent pre-rRNA and work in concert to generate RNA folding, modifications, rearrangements and cleavage as well as targeted degradation of pre-ribosomal RNA by the RNA exosome. Involved in nucleolar processing of pre-18S ribosomal RNA. The protein is U3 small nucleolar RNA-associated protein 18 homolog (Utp18) of Mus musculus (Mouse).